The sequence spans 237 residues: Cyclic nucleotide phosphodiesterase inhibitor (237 aa).

An N-terminal signal peptide occupies residues 1 to 20 (MAKIIISLILLLSLFSFSYG). Residues Asn-28, Asn-65, and Asn-70 are each glycosylated (N-linked (GlcNAc...) asparagine). Cys-rich CT repeat units lie at residues 57–81 (DLCH…CNDN), 82–105 (NPCT…CDPG), 116–139 (DPCT…CNDG), 140–162 (DACT…CDDN), and 163–186 (DPCT…CSIK). Asn-153 carries N-linked (GlcNAc...) asparagine glycosylation. Residue Asn-207 is glycosylated (N-linked (GlcNAc...) asparagine).

PDI acts by binding stoichiometrically to cyclic nucleotide phosphodiesterase, changing the KM of the enzyme for cAMP from 10 uM to 2 mM. The polypeptide is Cyclic nucleotide phosphodiesterase inhibitor (pdiA) (Dictyostelium discoideum (Social amoeba)).